A 106-amino-acid polypeptide reads, in one-letter code: MRRDIVVNQQFTSKVKSIGINSHGAILSSANEPKKLPNKKLVSTKSHTQVNREKSKNKDTYEDYSDSNNSHITYGLPNYFVKKNRLSVDNDMVESNNNEFDYISDD.

Positions 28 to 68 are disordered; that stretch reads SSANEPKKLPNKKLVSTKSHTQVNREKSKNKDTYEDYSDSN. Residues 50 to 61 are compositionally biased toward basic and acidic residues; that stretch reads VNREKSKNKDTY.

This is an uncharacterized protein from Acanthamoeba polyphaga (Amoeba).